The chain runs to 143 residues: Snake venom vascular endothelial growth factor toxin (143 aa).

A signal peptide spans 1–24 (MAAYLLAVAILFCIQGWPSATVQG). Q25 carries the pyrrolidone carboxylic acid modification. Cystine bridges form between C38-C80, C69-C115, and C73-C117. Residues 115-143 (CECRPRSPGDVNNGRNPEEGEPRARFPFV) are disordered. Residues 130–143 (NPEEGEPRARFPFV) show a composition bias toward basic and acidic residues.

It belongs to the PDGF/VEGF growth factor family. Snake venom VEGF subfamily. In terms of assembly, homodimer; disulfide-linked. Interacts with VEGF receptor-2 (KDR). In terms of processing, the N-terminus is blocked for N-terminal sequencing, suggesting a Pyrrolidone carboxylic acid at Gln-25. As to expression, expressed by the venom gland.

It is found in the secreted. Functionally, snake venom VEGFs that may contribute to venom dispersion and prey subjugation by inducing vascular permeability and hypotension. This protein induces an increase in capillary permeability when intradermally injected into mice. Also provokes a drastic hypotensive effect after intravenous injection. The hypotension is mediated by nitric oxide (NO), which is produced by VEGF-activated endothelium NO synthase. Also induces angiogenesis in vitro. Unlike other crotalid VEGFs, this protein interacts with VEGF receptor-2 (KDR) with a high affinity (Kd=413 pM), whereas no interaction is detected with VEGF receptor-1 (FLT1). The chain is Snake venom vascular endothelial growth factor toxin from Protobothrops jerdonii (Jerdon's pitviper).